We begin with the raw amino-acid sequence, 206 residues long: Ribosomal RNA large subunit methyltransferase E (206 aa).

The S-adenosyl-L-methionine site is built by G61, W63, D81, D97, and D122. Residue K162 is the Proton acceptor of the active site.

It belongs to the class I-like SAM-binding methyltransferase superfamily. RNA methyltransferase RlmE family.

The protein localises to the cytoplasm. The enzyme catalyses uridine(2552) in 23S rRNA + S-adenosyl-L-methionine = 2'-O-methyluridine(2552) in 23S rRNA + S-adenosyl-L-homocysteine + H(+). Specifically methylates the uridine in position 2552 of 23S rRNA at the 2'-O position of the ribose in the fully assembled 50S ribosomal subunit. The chain is Ribosomal RNA large subunit methyltransferase E from Neisseria gonorrhoeae (strain NCCP11945).